The following is a 444-amino-acid chain: Argininosuccinate synthase (444 aa).

ATP is bound by residues 18–26 (AFSGGLDTS) and Ala44. Tyr100 contacts L-citrulline. ATP-binding residues include Gly130 and Thr132. L-aspartate-binding residues include Thr132, Asn136, and Asp137. An L-citrulline-binding site is contributed by Asn136. Asp137 lines the ATP pocket. L-citrulline is bound by residues Arg140 and Ser193. Asp195 contacts ATP. Thr202, Glu204, and Glu281 together coordinate L-citrulline.

Belongs to the argininosuccinate synthase family. Type 2 subfamily. Homotetramer.

The protein resides in the cytoplasm. It carries out the reaction L-citrulline + L-aspartate + ATP = 2-(N(omega)-L-arginino)succinate + AMP + diphosphate + H(+). It functions in the pathway amino-acid biosynthesis; L-arginine biosynthesis; L-arginine from L-ornithine and carbamoyl phosphate: step 2/3. This is Argininosuccinate synthase from Histophilus somni (strain 2336) (Haemophilus somnus).